A 461-amino-acid chain; its full sequence is Alkaline phosphatase 4 (461 aa).

Positions 1–41 (MKKMSLFQNMKSKLLPIAAVSVLTAGIFAGAELQQTEKASA) are cleaved as a signal peptide. Asp58 provides a ligand contact to Mg(2+). Asp58 is a binding site for Zn(2+). Ser108 serves as the catalytic Phosphoserine intermediate. 2 residues coordinate Mg(2+): Thr161 and Glu282. Residues Asp287, His291, Asp329, His330, and His423 each contribute to the Zn(2+) site.

Belongs to the alkaline phosphatase family. Monomer. Requires Mg(2+) as cofactor. Zn(2+) serves as cofactor.

It carries out the reaction a phosphate monoester + H2O = an alcohol + phosphate. In Bacillus subtilis (strain 168), this protein is Alkaline phosphatase 4 (phoA).